Reading from the N-terminus, the 656-residue chain is Putative cysteine-rich receptor-like protein kinase 32 (656 aa).

Residues 1-23 (MCLQNLLSILCFVLAISFGYVSA) form the signal peptide. 2 Gnk2-homologous domains span residues 24-126 (QKCV…NSSF) and 134-238 (PTMV…GSEY). The Extracellular segment spans residues 24-262 (QKCVDSMFFR…PDGKTISTGA (239 aa)). N-linked (GlcNAc...) asparagine glycosylation is found at N35, N52, N61, N103, and N123. A helical membrane pass occupies residues 263-283 (IVAVVVSVVIFVVLLALVLVI). Topologically, residues 284-656 (RKRRQSYKTL…SASITRVTPR (373 aa)) are cytoplasmic. The region spanning 321–606 (FSRNNKLGKG…IFQMLTNSSI (286 aa)) is the Protein kinase domain. Residues 327–335 (LGKGGFGEV) and K349 each bind ATP. Y394 carries the post-translational modification Phosphotyrosine. D454 acts as the Proton acceptor in catalysis. S458 carries the phosphoserine modification. Residue T494 is modified to Phosphothreonine. Y502 carries the post-translational modification Phosphotyrosine.

This sequence belongs to the protein kinase superfamily. Ser/Thr protein kinase family. CRK subfamily.

It is found in the membrane. The catalysed reaction is L-seryl-[protein] + ATP = O-phospho-L-seryl-[protein] + ADP + H(+). It carries out the reaction L-threonyl-[protein] + ATP = O-phospho-L-threonyl-[protein] + ADP + H(+). The polypeptide is Putative cysteine-rich receptor-like protein kinase 32 (CRK32) (Arabidopsis thaliana (Mouse-ear cress)).